The sequence spans 982 residues: Probable beta-galactosidase C (982 aa).

Residues Met-1–Ala-21 form the signal peptide. Residues Tyr-80, Asn-125, Ala-126, Glu-127, and Asn-185 each contribute to the substrate site. The active-site Proton donor is Glu-186. Tyr-249 serves as a coordination point for substrate. Residues Cys-255 and Cys-302 are joined by a disulfide bond. N-linked (GlcNAc...) asparagine glycosylation occurs at Asn-274. The active-site Nucleophile is the Glu-285. Substrate is bound at residue Tyr-351. N-linked (GlcNAc...) asparagine glycans are attached at residues Asn-389, Asn-434, Asn-600, Asn-675, Asn-718, and Asn-785.

The protein belongs to the glycosyl hydrolase 35 family.

It is found in the secreted. It catalyses the reaction Hydrolysis of terminal non-reducing beta-D-galactose residues in beta-D-galactosides.. Cleaves beta-linked terminal galactosyl residues from gangliosides, glycoproteins, and glycosaminoglycans. The sequence is that of Probable beta-galactosidase C (lacC) from Penicillium rubens (strain ATCC 28089 / DSM 1075 / NRRL 1951 / Wisconsin 54-1255) (Penicillium chrysogenum).